The following is a 56-amino-acid chain: Large ribosomal subunit protein bL33 (56 aa).

Belongs to the bacterial ribosomal protein bL33 family.

The polypeptide is Large ribosomal subunit protein bL33 (Vibrio vulnificus (strain YJ016)).